The following is a 115-amino-acid chain: Macroconotoxin Mu8.1 (115 aa).

Positions 1-21 (MDMKMTFSGLVLVVLVTTVVG) are cleaved as a signal peptide. A propeptide spanning residues 22–26 (SSVRR) is cleaved from the precursor. Intrachain disulfides connect Cys-36-Cys-77, Cys-44-Cys-60, Cys-48-Cys-56, Cys-83-Cys-115, and Cys-87-Cys-97. Residue Glu-40 participates in Zn(2+) binding. A Zn(2+)-binding site is contributed by His-68.

Mostly found as a homodimer in solution; non-covalently bound. As to expression, expressed by the venom duct.

The protein resides in the secreted. In terms of biological role, modestly and reversibly inhibits Cav2.3/CACNA1E (IC(50)=5.8 uM) recombinantly expressed in HEK293 cells without affecting the voltage dependence of activation. In mouse DRG sensory neurons, modulates depolarization-induced calcium influx. This Conus mucronatus (Pointed cone) protein is Macroconotoxin Mu8.1.